The following is a 68-amino-acid chain: Large ribosomal subunit protein uL29 (68 aa).

Belongs to the universal ribosomal protein uL29 family.

The chain is Large ribosomal subunit protein uL29 from Prochlorococcus marinus (strain SARG / CCMP1375 / SS120).